A 103-amino-acid polypeptide reads, in one-letter code: Isocitrate dehydrogenase [NAD] subunit beta, mitochondrial (103 aa).

Belongs to the isocitrate and isopropylmalate dehydrogenases family. As to quaternary structure, heterooligomer of subunits alpha (IDH3A), beta (IDH3B), and gamma (IDH3G) in the apparent ratio of 2:1:1. The heterodimer containing one IDH3A and one IDH3B subunit and the heterodimer containing one IDH3A and one IDH3G subunit assemble into a heterotetramer (which contains two subunits of IDH3A, one of IDH3B and one of IDH3G) and further into the heterooctamer.

It is found in the mitochondrion. Its activity is regulated as follows. The heterotetramer and the heterodimer composed of IDH3A and IDH3G subunits can be allosterically activated by citrate (CIT) or/and ADP, and the two activators can act independently or synergistically. The heterodimer composed of IDH3A and IDH3B subunits cannot be allosterically regulated and the allosteric regulation of the heterotetramer is through the IDH3G subunit and not the IDH3B subunit. The IDH3G subunit contains the allosteric site which consists of a CIT-binding site and an ADP-binding site, and the binding of CIT and ADP causes conformational changes at the allosteric site which are transmitted to the active site in the catalytic subunit (IDH3A) through a cascade of conformational changes at the heterodimer interface, leading to stabilization of the isocitrate-binding at the active site and thus activation of the enzyme. ATP can activate the heterotetramer and the heterodimer composed of IDH3A and IDH3G subunits at low concentrations but inhibits their activities at high concentrations, whereas ATP exhibits only inhibitory effect on the heterodimer composed of IDH3A and IDH3B subunits. In terms of biological role, plays a structural role to facilitate the assembly and ensure the full activity of the enzyme catalyzing the decarboxylation of isocitrate (ICT) into alpha-ketoglutarate. The heterodimer composed of the alpha (IDH3A) and beta (IDH3B) subunits and the heterodimer composed of the alpha (IDH3A) and gamma (IDH3G) subunits, have considerable basal activity but the full activity of the heterotetramer (containing two subunits of IDH3A, one of IDH3B and one of IDH3G) requires the assembly and cooperative function of both heterodimers. The sequence is that of Isocitrate dehydrogenase [NAD] subunit beta, mitochondrial (IDH3B) from Sus scrofa (Pig).